Here is a 79-residue protein sequence, read N- to C-terminus: Short neurotoxin 7 (79 aa).

A signal peptide spans 1-21 (MKTLLLTLVMVTIMCLDLGYT). 4 disulfide bridges follow: Cys-24–Cys-41, Cys-34–Cys-59, Cys-63–Cys-71, and Cys-72–Cys-77.

The protein belongs to the three-finger toxin family. Short-chain subfamily. Type III alpha-neurotoxin sub-subfamily. As to expression, expressed by the venom gland.

The protein localises to the secreted. In terms of biological role, binds with high affinity to muscle nicotinic acetylcholine receptor (nAChR) and hinders acetylcholine binding to the receptor, thereby impairing neuromuscular transmission. Competes with the binding of alpha-bungarotoxin on muscle AChR (from Torpedo) (IC(50)=0.30 uM). In vivo, causes muscle paralysis, spasms and increased respiration. This chain is Short neurotoxin 7, found in Pseudonaja textilis (Eastern brown snake).